The primary structure comprises 29 residues: Glucagon (29 aa).

It belongs to the glucagon family.

Its subcellular location is the secreted. Its function is as follows. Promotes hydrolysis of glycogen and lipids, and raises the blood sugar level. In Torpedo marmorata (Marbled electric ray), this protein is Glucagon (gcg).